We begin with the raw amino-acid sequence, 105 residues long: Met repressor (105 aa).

Belongs to the MetJ family. In terms of assembly, homodimer.

It is found in the cytoplasm. Its function is as follows. This regulatory protein, when combined with SAM (S-adenosylmethionine) represses the expression of the methionine regulon and of enzymes involved in SAM synthesis. The polypeptide is Met repressor (Hamiltonella defensa subsp. Acyrthosiphon pisum (strain 5AT)).